The sequence spans 205 residues: Small ribosomal subunit protein uS4 (205 aa).

A disordered region spans residues 18–49 (NIWGRPKSPVNKREYGPGQHGQRRKGKLSDFG). The region spanning 94-157 (RRLDTVVYRA…KQLALVLEAN (64 aa)) is the S4 RNA-binding domain.

It belongs to the universal ribosomal protein uS4 family. Part of the 30S ribosomal subunit. Contacts protein S5. The interaction surface between S4 and S5 is involved in control of translational fidelity.

Its function is as follows. One of the primary rRNA binding proteins, it binds directly to 16S rRNA where it nucleates assembly of the body of the 30S subunit. In terms of biological role, with S5 and S12 plays an important role in translational accuracy. The chain is Small ribosomal subunit protein uS4 from Nitrobacter hamburgensis (strain DSM 10229 / NCIMB 13809 / X14).